Reading from the N-terminus, the 335-residue chain is Protein-arginine kinase (335 aa).

The Phosphagen kinase C-terminal domain maps to 20–243; it reads IVMSSRIRLA…QQIINEEMQI (224 aa). ATP contacts are provided by residues 23–27, H81, R114, 165–169, and 196–201; these read SSRIR, RASVM, and RGIYGE.

This sequence belongs to the ATP:guanido phosphotransferase family.

The catalysed reaction is L-arginyl-[protein] + ATP = N(omega)-phospho-L-arginyl-[protein] + ADP + H(+). Functionally, catalyzes the specific phosphorylation of arginine residues in proteins. The chain is Protein-arginine kinase from Staphylococcus haemolyticus (strain JCSC1435).